Reading from the N-terminus, the 168-residue chain is Ubiquitin-conjugating enzyme E2 2 (168 aa).

Residues 4–150 (PAKRRLMRDF…VRETVENSWN (147 aa)) enclose the UBC core domain. Cys-88 acts as the Glycyl thioester intermediate in catalysis. Residues 143-168 (ETVENSWNEDDEDEDEDEDEDIDDAE) are disordered. Over residues 149–168 (WNEDDEDEDEDEDEDIDDAE) the composition is skewed to acidic residues.

This sequence belongs to the ubiquitin-conjugating enzyme family.

The protein resides in the cytoplasm. Its subcellular location is the nucleus. The catalysed reaction is S-ubiquitinyl-[E1 ubiquitin-activating enzyme]-L-cysteine + [E2 ubiquitin-conjugating enzyme]-L-cysteine = [E1 ubiquitin-activating enzyme]-L-cysteine + S-ubiquitinyl-[E2 ubiquitin-conjugating enzyme]-L-cysteine.. The protein operates within protein modification; protein ubiquitination. Functionally, catalyzes the covalent attachment of ubiquitin to other proteins. Plays a role in transcription regulation by catalyzing the monoubiquitination of histone H2B to form H2BK123ub1. H2BK123ub1 gives a specific tag for epigenetic transcriptional activation and is also a prerequisite for H3K4me and H3K79me formation. Also involved in postreplication repair of UV-damaged DNA, in N-end rule-dependent protein degradation and in sporulation. This chain is Ubiquitin-conjugating enzyme E2 2 (UBC2), found in Debaryomyces hansenii (strain ATCC 36239 / CBS 767 / BCRC 21394 / JCM 1990 / NBRC 0083 / IGC 2968) (Yeast).